Here is a 130-residue protein sequence, read N- to C-terminus: Phosphoribosyl-AMP cyclohydrolase 1 (130 aa).

Asp-77 contacts Mg(2+). Cys-78 contributes to the Zn(2+) binding site. The Mg(2+) site is built by Asp-79 and Asp-81. Residues Cys-95 and Cys-102 each coordinate Zn(2+).

Belongs to the PRA-CH family. Homodimer. Requires Mg(2+) as cofactor. It depends on Zn(2+) as a cofactor.

It localises to the cytoplasm. It carries out the reaction 1-(5-phospho-beta-D-ribosyl)-5'-AMP + H2O = 1-(5-phospho-beta-D-ribosyl)-5-[(5-phospho-beta-D-ribosylamino)methylideneamino]imidazole-4-carboxamide. The protein operates within amino-acid biosynthesis; L-histidine biosynthesis; L-histidine from 5-phospho-alpha-D-ribose 1-diphosphate: step 3/9. Its function is as follows. Catalyzes the hydrolysis of the adenine ring of phosphoribosyl-AMP. The chain is Phosphoribosyl-AMP cyclohydrolase 1 from Pseudomonas fluorescens (strain ATCC BAA-477 / NRRL B-23932 / Pf-5).